The sequence spans 330 residues: 3',5'-cyclic-nucleotide phosphodiesterase (330 aa).

An N-terminal signal peptide occupies residues 1–22 (MFKNKLAVLFTCLSVFSFSAQS).

It belongs to the cyclic nucleotide phosphodiesterase class-II family.

The protein resides in the periplasm. It catalyses the reaction a nucleoside 3',5'-cyclic phosphate + H2O = a nucleoside 5'-phosphate + H(+). Its function is as follows. Seems to allow the organism to grow on cAMP. The polypeptide is 3',5'-cyclic-nucleotide phosphodiesterase (cpdP) (Aliivibrio fischeri (Vibrio fischeri)).